The sequence spans 275 residues: NH(3)-dependent NAD(+) synthetase (275 aa).

ATP is bound at residue Gly46 to Ser53. Asp52 contacts Mg(2+). Residue Arg140 coordinates deamido-NAD(+). Residue Thr160 coordinates ATP. Glu165 contributes to the Mg(2+) binding site. Deamido-NAD(+)-binding residues include Lys173 and Asp180. Positions 189 and 211 each coordinate ATP. Deamido-NAD(+) is bound at residue His260–Lys261.

It belongs to the NAD synthetase family. As to quaternary structure, homodimer.

It carries out the reaction deamido-NAD(+) + NH4(+) + ATP = AMP + diphosphate + NAD(+) + H(+). It participates in cofactor biosynthesis; NAD(+) biosynthesis; NAD(+) from deamido-NAD(+) (ammonia route): step 1/1. Catalyzes the ATP-dependent amidation of deamido-NAD to form NAD. Uses ammonia as a nitrogen source. The chain is NH(3)-dependent NAD(+) synthetase from Escherichia coli O17:K52:H18 (strain UMN026 / ExPEC).